We begin with the raw amino-acid sequence, 171 residues long: UPF0260 protein Nham_1404 (171 aa).

The protein belongs to the UPF0260 family.

The protein is UPF0260 protein Nham_1404 of Nitrobacter hamburgensis (strain DSM 10229 / NCIMB 13809 / X14).